Consider the following 35-residue polypeptide: Antimicrobial peptide 3 (35 aa).

In terms of domain architecture, Chitin-binding type-1 spans 4-35 (GGECGGRFGGCAGGQCCSRFGFCGSGPKYCAH). Intrachain disulfides connect Cys-7–Cys-20, Cys-14–Cys-26, and Cys-19–Cys-33.

Contains 3 disulfide bonds. In terms of tissue distribution, expressed in leaf, flower, stem and seed with highest expression in leaf (at protein level).

Functionally, has antifungal activity against A.niger (IC(50)=5.4 uM), B.sorokiniana (IC(50)=2.0 uM), B.cinerea (IC(50)=1.6 uM), F.solani (IC(50)=3.7 uM) and A.alternata (IC(50)=5.0 uM). Binds chitin in vitro. Has no antibacterial activity at concentrations up to 10 uM. The protein is Antimicrobial peptide 3 of Stellaria media (Common chickweed).